Reading from the N-terminus, the 512-residue chain is MFEVVPFDIEIGQYKVMLNIADARAMGLNPGDRVRVRTRGASLTAILDVTGQMIGQGQVGIFTEAFRDLKEAKSVEISPAPRPASISYIKMLMDRQKLSEDQIRSIVRDIVYNNLSEIELSAYITASYIHNLDPQETEWLTRAMIETGERIYFDKHPVVDKHSIGGVPGNKVSMLVVPIVAASGLLIPKTSSRAITGAGGTADLMEVLAPVEFTADEIKEITETVGGVIAWGGATNIAPADDRLIKAEYALAIDPYSQMLASIMAKKGAVGADAVVVDMPTGPGTKLETPEKARVLAKDLTDLGERLGIRVECAMTFGGSPVGRTVGPALEVREALKMLETGEGPNSLREKSLALAGILLEMGGVAARGEGYRAAEEILVSGKAHRKLMEIVEAQGGDPKIRSEDIQIGEHQKQILSPTNGYVVAFYNKRIIEIARAAGAPGDKRAGVIIHKKMGEIVKKGEPLLTICSSTDWELECAVKMCSMRDALEQPPIVVEGMLLERYPTERYPRTI.

Residues Gly166, 192-197 (SRAITG), and Thr201 contribute to the AMP site. Asp254 acts as the Proton donor in catalysis. The AMP site is built by Ser262 and Lys286.

The protein belongs to the thymidine/pyrimidine-nucleoside phosphorylase family. Type 2 subfamily.

The enzyme catalyses AMP + phosphate = alpha-D-ribose 1,5-bisphosphate + adenine. It catalyses the reaction CMP + phosphate = cytosine + alpha-D-ribose 1,5-bisphosphate. The catalysed reaction is UMP + phosphate = alpha-D-ribose 1,5-bisphosphate + uracil. In terms of biological role, catalyzes the conversion of AMP and phosphate to adenine and ribose 1,5-bisphosphate (R15P). Exhibits phosphorylase activity toward CMP and UMP in addition to AMP. Functions in an archaeal AMP degradation pathway, together with R15P isomerase and RubisCO. The sequence is that of AMP phosphorylase from Methanothrix thermoacetophila (strain DSM 6194 / JCM 14653 / NBRC 101360 / PT) (Methanosaeta thermophila).